The primary structure comprises 973 residues: EF-hand calcium-binding domain-containing protein 13 (973 aa).

The tract at residues 384–448 is disordered; the sequence is YSKNGINFKK…HSSLQKQVSS (65 aa). Positions 396–405 are enriched in basic and acidic residues; it reads EKGEIHDSKS. The span at 406-418 shows a compositional bias: low complexity; that stretch reads KPQSLKSSTSLSK. 6 consecutive EF-hand domains span residues 488-523, 524-559, 633-668, 756-791, 792-827, and 864-899; these read LLDE…ERSF, PECN…FGIY, LKKD…MRDA, PKVN…LNVN, LTEE…SPHF, and TANA…ILTI.

The chain is EF-hand calcium-binding domain-containing protein 13 (EFCAB13) from Homo sapiens (Human).